The following is a 313-amino-acid chain: Malate dehydrogenase (313 aa).

Residues 8–13 and aspartate 33 contribute to the NAD(+) site; that span reads GAGNVG. Positions 83 and 89 each coordinate substrate. NAD(+)-binding positions include asparagine 96 and 119-121; that span reads ISN. 2 residues coordinate substrate: asparagine 121 and arginine 152. Histidine 176 (proton acceptor) is an active-site residue.

Belongs to the LDH/MDH superfamily. MDH type 3 family.

It carries out the reaction (S)-malate + NAD(+) = oxaloacetate + NADH + H(+). Catalyzes the reversible oxidation of malate to oxaloacetate. This is Malate dehydrogenase from Parabacteroides distasonis (strain ATCC 8503 / DSM 20701 / CIP 104284 / JCM 5825 / NCTC 11152).